The primary structure comprises 520 residues: Cytochrome P450 monooxygenase TRI4 (520 aa).

The chain crosses the membrane as a helical span at residues 10-30 (LVNIPISHAVGVVAASTVIYF). Asn-447 carries N-linked (GlcNAc...) asparagine glycosylation. Cys-455 contacts heme.

The protein belongs to the cytochrome P450 family. It depends on heme as a cofactor.

It localises to the membrane. Its pathway is sesquiterpene biosynthesis; trichothecene biosynthesis. Cytochrome P450 monooxygenase; part of the core gene cluster that mediates the biosynthesis of trichothecenes, a very large family of chemically related bicyclic sesquiterpene compounds acting as mycotoxins, including T2-toxin. The biosynthesis of trichothecenes begins with the cyclization of farnesyl diphosphate to trichodiene and is catalyzed by the trichodiene synthase TRI5. Trichodiene undergoes a series of oxygenations catalyzed by the cytochrome P450 monooxygenase TRI4. TRI4 controls the addition of four oxygens at C-2, C-3, C-11, and the C-12, C-13-epoxide to form the intermediate isotrichotriol. Isotrichotriol then undergoes a non-enzymatic isomerization and cyclization to form isotrichodermol. During this process, the oxygen at the C-2 position becomes the pyran ring oxygen and the hydroxyl group at C-11 is lost. More complex type A trichothecenes are built by modifying isotrichodermol through a series of paired hydroxylation and acetylation or acylation steps. Isotrichodermol is converted to isotrichodermin by the acetyltransferase TRI101. TRI101 encodes a C-3 transacetylase that acts as a self-protection or resistance factor during biosynthesis and that the presence of a free C-3 hydroxyl group is a key component of Fusarium trichothecene phytotoxicity. A second hydroxyl group is added to C-15 by the trichothecene C-15 hydroxylase TRI11, producing 15-decalonectrin, which is then acetylated by TRI3, producing calonectrin. A third hydroxyl group is added at C-4 by the cytochrome P450 monooxygenase TRI13, converting calonectrin to 3,15-diacetoxyspirpenol, which is subsequently acetylated by the acetyltransferase TRI7. A fourth hydroxyl group is added to C-8 by the cytochrome P450 monooxygenase TRI1, followed by the addition of an isovaleryl moiety by TRI16. Finally, the acetyl group is removed from the C-3 position by the trichothecene C-3 esterase TRI8 to produce T-2 toxin. The polypeptide is Cytochrome P450 monooxygenase TRI4 (Fusarium sporotrichioides).